The following is a 1128-amino-acid chain: Translation initiation factor IF-2 (1128 aa).

The disordered stretch occupies residues 57–519 (NSDKQILSIN…KETTRQRQKR (463 aa)). The span at 70-83 (NKKDNYKQNKEDKS) shows a compositional bias: basic and acidic residues. Low complexity predominate over residues 100-110 (KKQLLNKPLNK). A compositionally biased stretch (polar residues) spans 120–146 (QLKNPNKPNIYNSSQSQANLTNQNTKS). Over residues 147-158 (KPSEHFNKDKKT) the composition is skewed to basic and acidic residues. Over residues 182 to 196 (KNINNNLKSNESSKN) the composition is skewed to low complexity. The segment covering 201–214 (GDKRELSLKPDQNR) has biased composition (basic and acidic residues). 2 stretches are compositionally biased toward polar residues: residues 243–267 (KQNN…NRPG) and 386–397 (AKTNNQKQNIES). Residues 432–445 (RKDWDDSAKLEALR) show a composition bias toward basic and acidic residues. Residues 499 to 519 (HKSTKQFKKKKKETTRQRQKR) show a composition bias toward basic residues. In terms of domain architecture, tr-type G spans 620–792 (KRPPVITVMG…ILLVSEVEDL (173 aa)). A G1 region spans residues 629–636 (GHVDHGKT). 629–636 (GHVDHGKT) serves as a coordination point for GTP. The G2 stretch occupies residues 654-658 (GITQH). The segment at 679 to 682 (DTPG) is G3. GTP-binding positions include 679–683 (DTPGH) and 733–736 (NKID). The tract at residues 733–736 (NKID) is G4. The G5 stretch occupies residues 769 to 771 (SAI).

The protein belongs to the TRAFAC class translation factor GTPase superfamily. Classic translation factor GTPase family. IF-2 subfamily.

It localises to the cytoplasm. Functionally, one of the essential components for the initiation of protein synthesis. Protects formylmethionyl-tRNA from spontaneous hydrolysis and promotes its binding to the 30S ribosomal subunits. Also involved in the hydrolysis of GTP during the formation of the 70S ribosomal complex. The chain is Translation initiation factor IF-2 from Prochlorococcus marinus (strain MIT 9312).